We begin with the raw amino-acid sequence, 556 residues long: Genetic interactor of prohibitins 3, mitochondrial (556 aa).

The N-terminal 21 residues, 1-21 (MLNLCHALRGVRQFSCSVIVK), are a transit peptide targeting the mitochondrion. In terms of domain architecture, CP-type G spans 113-305 (ESTLNDILNY…LFDLPGYSTS (193 aa)).

The protein belongs to the TRAFAC class YlqF/YawG GTPase family. GEP3 subfamily.

It is found in the mitochondrion. Its function is as follows. Interacts genetically with prohibitins and thus may be involved in the mitochondrial lipid metabolism. The protein is Genetic interactor of prohibitins 3, mitochondrial (GEP3) of Saccharomyces cerevisiae (strain Lalvin EC1118 / Prise de mousse) (Baker's yeast).